Here is a 170-residue protein sequence, read N- to C-terminus: uncharacterized protein (170 aa).

This is an uncharacterized protein from Archaeoglobus fulgidus (strain ATCC 49558 / DSM 4304 / JCM 9628 / NBRC 100126 / VC-16).